A 360-amino-acid polypeptide reads, in one-letter code: NAD(P)H-quinone oxidoreductase subunit 1, chloroplastic (360 aa).

9 helical membrane passes run 27–47, 98–118, 129–149, 165–185, 203–223, 248–268, 269–289, 297–317, and 340–360; these read IWIFVPIFSLVLGIITGVLVI, FSIGPSIAVISILLSYSVIPF, IGIFLWIAISSIAPIGLLMSG, AAQSISYEIPLTLCVLSISLL, FWGWNLWRQPIGFIIFLISSL, YSGIKFGLFYVASYLNLLISS, LFVTVLYLGGWNISIPYISIL, IFGTTICIFITLAKTYLFLFI, and FLLPISLGNLLLTTSFQLFSL.

It belongs to the complex I subunit 1 family. In terms of assembly, NDH is composed of at least 16 different subunits, 5 of which are encoded in the nucleus.

It localises to the plastid. It is found in the chloroplast thylakoid membrane. It catalyses the reaction a plastoquinone + NADH + (n+1) H(+)(in) = a plastoquinol + NAD(+) + n H(+)(out). It carries out the reaction a plastoquinone + NADPH + (n+1) H(+)(in) = a plastoquinol + NADP(+) + n H(+)(out). In terms of biological role, NDH shuttles electrons from NAD(P)H:plastoquinone, via FMN and iron-sulfur (Fe-S) centers, to quinones in the photosynthetic chain and possibly in a chloroplast respiratory chain. The immediate electron acceptor for the enzyme in this species is believed to be plastoquinone. Couples the redox reaction to proton translocation, and thus conserves the redox energy in a proton gradient. The polypeptide is NAD(P)H-quinone oxidoreductase subunit 1, chloroplastic (Olimarabidopsis pumila (Dwarf rocket)).